A 112-amino-acid chain; its full sequence is ATP synthase subunit c (112 aa).

2 helical membrane-spanning segments follow: residues 36 to 56 (FSVL…AIGM) and 81 to 101 (MFIA…IALI).

It belongs to the ATPase C chain family. As to quaternary structure, F-type ATPases have 2 components, F(1) - the catalytic core - and F(0) - the membrane proton channel. F(1) has five subunits: alpha(3), beta(3), gamma(1), delta(1), epsilon(1). F(0) has three main subunits: a(1), b(2) and c(10-14). The alpha and beta chains form an alternating ring which encloses part of the gamma chain. F(1) is attached to F(0) by a central stalk formed by the gamma and epsilon chains, while a peripheral stalk is formed by the delta and b chains.

It is found in the cell inner membrane. F(1)F(0) ATP synthase produces ATP from ADP in the presence of a proton or sodium gradient. F-type ATPases consist of two structural domains, F(1) containing the extramembraneous catalytic core and F(0) containing the membrane proton channel, linked together by a central stalk and a peripheral stalk. During catalysis, ATP synthesis in the catalytic domain of F(1) is coupled via a rotary mechanism of the central stalk subunits to proton translocation. Its function is as follows. Key component of the F(0) channel; it plays a direct role in translocation across the membrane. A homomeric c-ring of between 10-14 subunits forms the central stalk rotor element with the F(1) delta and epsilon subunits. This Campylobacter jejuni subsp. jejuni serotype O:6 (strain 81116 / NCTC 11828) protein is ATP synthase subunit c.